Consider the following 55-residue polypeptide: UPF0291 protein CA_C2726 (55 aa).

It belongs to the UPF0291 family.

The protein localises to the cytoplasm. In Clostridium acetobutylicum (strain ATCC 824 / DSM 792 / JCM 1419 / IAM 19013 / LMG 5710 / NBRC 13948 / NRRL B-527 / VKM B-1787 / 2291 / W), this protein is UPF0291 protein CA_C2726.